A 1080-amino-acid chain; its full sequence is Putative bifunctional amine oxidase DDB_G0291301 (1080 aa).

The tract at residues 1–450 (MREFLKDDYD…TIAKSTVPTN (450 aa)) is putative sarcosine oxidase. Residue 10 to 40 (DVIVCGGGPVGLATAYRCAKAGKKVLCLEKS) participates in FAD binding. Residues 445 to 464 (STVPTNQSSNPDGASSTAPT) form a disordered region. The tract at residues 450–1080 (NQSSNPDGAS…NTAASIGGLK (631 aa)) is putative L-amino-acid oxidase. Residues 508 to 528 (VGIIGAGMAGLYAAMILQDLG) traverse the membrane as a helical segment. FAD-binding positions include Glu-535, Arg-544, and 563–564 (GA). Substrate is bound at residue Tyr-886. FAD is bound by residues Glu-978 and 987-990 (VIGS).

This sequence in the N-terminal section; belongs to the MSOX/MTOX family. The protein in the C-terminal section; belongs to the flavin monoamine oxidase family. It depends on FAD as a cofactor.

Its subcellular location is the membrane. The enzyme catalyses sarcosine + O2 + H2O = formaldehyde + glycine + H2O2. It catalyses the reaction L-pipecolate + O2 = L-1-piperideine-6-carboxylate + H2O2 + H(+). It carries out the reaction an L-alpha-amino acid + O2 + H2O = a 2-oxocarboxylate + H2O2 + NH4(+). In terms of biological role, catalyzes an oxidative deamination of predominantly hydrophobic and aromatic L-amino acids. Metabolizes sarcosine, L-pipecolic acid and L-proline. The sequence is that of Putative bifunctional amine oxidase DDB_G0291301 from Dictyostelium discoideum (Social amoeba).